Here is a 189-residue protein sequence, read N- to C-terminus: Pyridoxal 5'-phosphate synthase subunit PdxT (189 aa).

52–54 (GES) contacts L-glutamine. Residue C81 is the Nucleophile of the active site. L-glutamine is bound by residues R108 and 136 to 137 (IR). Active-site charge relay system residues include H172 and E174.

This sequence belongs to the glutaminase PdxT/SNO family. In the presence of PdxS, forms a dodecamer of heterodimers. Only shows activity in the heterodimer.

The enzyme catalyses aldehydo-D-ribose 5-phosphate + D-glyceraldehyde 3-phosphate + L-glutamine = pyridoxal 5'-phosphate + L-glutamate + phosphate + 3 H2O + H(+). It carries out the reaction L-glutamine + H2O = L-glutamate + NH4(+). It participates in cofactor biosynthesis; pyridoxal 5'-phosphate biosynthesis. Catalyzes the hydrolysis of glutamine to glutamate and ammonia as part of the biosynthesis of pyridoxal 5'-phosphate. The resulting ammonia molecule is channeled to the active site of PdxS. The polypeptide is Pyridoxal 5'-phosphate synthase subunit PdxT (Haemophilus ducreyi (strain 35000HP / ATCC 700724)).